Here is a 179-residue protein sequence, read N- to C-terminus: Bifunctional protein PyrR (179 aa).

The PRPP-binding motif lies at 100-112 (VILVDDVLFTGRT).

Belongs to the purine/pyrimidine phosphoribosyltransferase family. PyrR subfamily. As to quaternary structure, homodimer and homohexamer; in equilibrium.

It carries out the reaction UMP + diphosphate = 5-phospho-alpha-D-ribose 1-diphosphate + uracil. Its function is as follows. Regulates transcriptional attenuation of the pyrimidine nucleotide (pyr) operon by binding in a uridine-dependent manner to specific sites on pyr mRNA. This disrupts an antiterminator hairpin in the RNA and favors formation of a downstream transcription terminator, leading to a reduced expression of downstream genes. In terms of biological role, also displays a weak uracil phosphoribosyltransferase activity which is not physiologically significant. The sequence is that of Bifunctional protein PyrR from Geobacillus sp. (strain WCH70).